Here is a 294-residue protein sequence, read N- to C-terminus: ATP synthase gamma chain (294 aa).

It belongs to the ATPase gamma chain family. F-type ATPases have 2 components, CF(1) - the catalytic core - and CF(0) - the membrane proton channel. CF(1) has five subunits: alpha(3), beta(3), gamma(1), delta(1), epsilon(1). CF(0) has three main subunits: a, b and c.

The protein resides in the cell inner membrane. Functionally, produces ATP from ADP in the presence of a proton gradient across the membrane. The gamma chain is believed to be important in regulating ATPase activity and the flow of protons through the CF(0) complex. This chain is ATP synthase gamma chain, found in Mesorhizobium japonicum (strain LMG 29417 / CECT 9101 / MAFF 303099) (Mesorhizobium loti (strain MAFF 303099)).